The chain runs to 363 residues: Phospho-N-acetylmuramoyl-pentapeptide-transferase (363 aa).

10 helical membrane-spanning segments follow: residues 33-53 (YAVL…GVLP), 82-102 (GVIF…PSFV), 105-125 (LILL…CAQV), 133-153 (GALD…FYFH), 166-186 (PVFV…WMSI), 198-218 (LSGA…YFLL), 227-247 (LLVP…ALAG), 271-291 (ALGF…LLLM), 295-315 (VILV…FFHV), and 340-360 (VLLR…GVLF).

Belongs to the glycosyltransferase 4 family. MraY subfamily. Mg(2+) is required as a cofactor.

Its subcellular location is the cell inner membrane. The catalysed reaction is UDP-N-acetyl-alpha-D-muramoyl-L-alanyl-gamma-D-glutamyl-meso-2,6-diaminopimeloyl-D-alanyl-D-alanine + di-trans,octa-cis-undecaprenyl phosphate = di-trans,octa-cis-undecaprenyl diphospho-N-acetyl-alpha-D-muramoyl-L-alanyl-D-glutamyl-meso-2,6-diaminopimeloyl-D-alanyl-D-alanine + UMP. It functions in the pathway cell wall biogenesis; peptidoglycan biosynthesis. In terms of biological role, catalyzes the initial step of the lipid cycle reactions in the biosynthesis of the cell wall peptidoglycan: transfers peptidoglycan precursor phospho-MurNAc-pentapeptide from UDP-MurNAc-pentapeptide onto the lipid carrier undecaprenyl phosphate, yielding undecaprenyl-pyrophosphoryl-MurNAc-pentapeptide, known as lipid I. This Treponema pallidum (strain Nichols) protein is Phospho-N-acetylmuramoyl-pentapeptide-transferase.